A 347-amino-acid polypeptide reads, in one-letter code: Isopentenyl-diphosphate delta-isomerase (347 aa).

11–12 contributes to the substrate binding site; sequence RK. FMN contacts are provided by residues 72–74, S102, and N131; that span reads AMT. Position 161 (Q161) interacts with substrate. E162 serves as a coordination point for Mg(2+). FMN contacts are provided by residues K192, T222, and 287 to 288; that span reads AG.

It belongs to the IPP isomerase type 2 family. As to quaternary structure, homooctamer. Dimer of tetramers. FMN is required as a cofactor. The cofactor is NADPH. It depends on Mg(2+) as a cofactor.

It localises to the cytoplasm. The enzyme catalyses isopentenyl diphosphate = dimethylallyl diphosphate. Functionally, involved in the biosynthesis of isoprenoids. Catalyzes the 1,3-allylic rearrangement of the homoallylic substrate isopentenyl (IPP) to its allylic isomer, dimethylallyl diphosphate (DMAPP). The sequence is that of Isopentenyl-diphosphate delta-isomerase from Lactococcus lactis subsp. lactis (strain IL1403) (Streptococcus lactis).